The sequence spans 361 residues: Porphobilinogen deaminase (361 aa).

Cys-265 carries the post-translational modification S-(dipyrrolylmethanemethyl)cysteine. Residues 341-361 form a disordered region; sequence LPPSSNTPTPQPITPITTNNS.

Belongs to the HMBS family. Dipyrromethane is required as a cofactor.

The enzyme catalyses 4 porphobilinogen + H2O = hydroxymethylbilane + 4 NH4(+). It participates in porphyrin-containing compound metabolism; protoporphyrin-IX biosynthesis; coproporphyrinogen-III from 5-aminolevulinate: step 2/4. Tetrapolymerization of the monopyrrole PBG into the hydroxymethylbilane pre-uroporphyrinogen in several discrete steps. The sequence is that of Porphobilinogen deaminase (HEM3) from Debaryomyces hansenii (strain ATCC 36239 / CBS 767 / BCRC 21394 / JCM 1990 / NBRC 0083 / IGC 2968) (Yeast).